A 196-amino-acid chain; its full sequence is UPF0314 protein Oant_0840 (196 aa).

Helical transmembrane passes span 15 to 35, 65 to 85, 127 to 147, and 151 to 171; these read WGLG…WLYF, WYTL…TVIA, FGDS…GFLI, and LPTK…LIVI.

This sequence belongs to the UPF0314 family.

Its subcellular location is the cell membrane. The sequence is that of UPF0314 protein Oant_0840 from Brucella anthropi (strain ATCC 49188 / DSM 6882 / CCUG 24695 / JCM 21032 / LMG 3331 / NBRC 15819 / NCTC 12168 / Alc 37) (Ochrobactrum anthropi).